A 204-amino-acid chain; its full sequence is ATP-dependent Clp protease proteolytic subunit (204 aa).

Catalysis depends on serine 102, which acts as the Nucleophile. The active site involves histidine 127.

The protein belongs to the peptidase S14 family. Fourteen ClpP subunits assemble into 2 heptameric rings which stack back to back to give a disk-like structure with a central cavity, resembling the structure of eukaryotic proteasomes.

It is found in the cytoplasm. The catalysed reaction is Hydrolysis of proteins to small peptides in the presence of ATP and magnesium. alpha-casein is the usual test substrate. In the absence of ATP, only oligopeptides shorter than five residues are hydrolyzed (such as succinyl-Leu-Tyr-|-NHMec, and Leu-Tyr-Leu-|-Tyr-Trp, in which cleavage of the -Tyr-|-Leu- and -Tyr-|-Trp bonds also occurs).. Its function is as follows. Cleaves peptides in various proteins in a process that requires ATP hydrolysis. Has a chymotrypsin-like activity. Plays a major role in the degradation of misfolded proteins. The protein is ATP-dependent Clp protease proteolytic subunit of Neisseria meningitidis serogroup C (strain 053442).